The primary structure comprises 153 residues: Actin-related protein 2/3 complex subunit 5-like protein (153 aa).

Phosphoserine is present on serine 64.

It belongs to the ARPC5 family. May be a component of the Arp2/3 complex in which it may replace ARPC5.

It is found in the cytoplasm. Its subcellular location is the cytoskeleton. Functionally, may function as component of the Arp2/3 complex which is involved in regulation of actin polymerization and together with an activating nucleation-promoting factor (NPF) mediates the formation of branched actin networks. The chain is Actin-related protein 2/3 complex subunit 5-like protein (ARPC5L) from Pongo abelii (Sumatran orangutan).